The sequence spans 247 residues: MLLLINNLILNDVPTPWGLYFQDSSTPNQEGIIELHDNIMFYLVLILCTVSWLLFSIVKDSSKNPLPHKYLVHGQTIEIIWTILPAVVLLIIAFPSFILLYLCDEVISPAMTIKAIGLQWYWRYEYSDFINDSGETIEFESYVIPEDLLEDGQLRLLDTDTSVVCPVNTHIRFIVSAADVIHDFAIPSLGIKVDACPGRLNQVSALIQREGVYYGMCSETCGVAHSAMPIKIEVVSTKEFLTWLNEQ.

At 12 to 38 the chain is on the mitochondrial intermembrane side; that stretch reads DVPTPWGLYFQDSSTPNQEGIIELHDN. A helical transmembrane segment spans residues 39 to 59; the sequence is IMFYLVLILCTVSWLLFSIVK. At 60–78 the chain is on the mitochondrial matrix side; that stretch reads DSSKNPLPHKYLVHGQTIE. The chain crosses the membrane as a helical span at residues 79–101; sequence IIWTILPAVVLLIIAFPSFILLY. Residues 102 to 247 lie on the Mitochondrial intermembrane side of the membrane; sequence LCDEVISPAM…KEFLTWLNEQ (146 aa). 6 residues coordinate Cu cation: His-182, Cys-217, Glu-219, Cys-221, His-225, and Met-228. Glu-219 is a Mg(2+) binding site.

Belongs to the cytochrome c oxidase subunit 2 family. Component of the cytochrome c oxidase (complex IV, CIV), a multisubunit enzyme composed of a catalytic core of 3 subunits and several supernumerary subunits. The complex exists as a monomer or a dimer and forms supercomplexes (SCs) in the inner mitochondrial membrane with ubiquinol-cytochrome c oxidoreductase (cytochrome b-c1 complex, complex III, CIII). Requires Cu cation as cofactor. In terms of processing, the signal sequence of COX2 is processed by IMP1.

Its subcellular location is the mitochondrion inner membrane. It carries out the reaction 4 Fe(II)-[cytochrome c] + O2 + 8 H(+)(in) = 4 Fe(III)-[cytochrome c] + 2 H2O + 4 H(+)(out). Component of the cytochrome c oxidase, the last enzyme in the mitochondrial electron transport chain which drives oxidative phosphorylation. The respiratory chain contains 3 multisubunit complexes succinate dehydrogenase (complex II, CII), ubiquinol-cytochrome c oxidoreductase (cytochrome b-c1 complex, complex III, CIII) and cytochrome c oxidase (complex IV, CIV), that cooperate to transfer electrons derived from NADH and succinate to molecular oxygen, creating an electrochemical gradient over the inner membrane that drives transmembrane transport and the ATP synthase. Cytochrome c oxidase is the component of the respiratory chain that catalyzes the reduction of oxygen to water. Electrons originating from reduced cytochrome c in the intermembrane space (IMS) are transferred via the dinuclear copper A center (CU(A)) of subunit 2 and heme A of subunit 1 to the active site in subunit 1, a binuclear center (BNC) formed by heme A3 and copper B (CU(B)). The BNC reduces molecular oxygen to 2 water molecules using 4 electrons from cytochrome c in the IMS and 4 protons from the mitochondrial matrix. The polypeptide is Cytochrome c oxidase subunit 2 (COX2) (Cyberlindnera mrakii (Yeast)).